We begin with the raw amino-acid sequence, 264 residues long: Thymidylate synthase (264 aa).

DUMP is bound at residue arginine 21. Residue histidine 51 participates in (6R)-5,10-methylene-5,6,7,8-tetrahydrofolate binding. 126 to 127 contacts dUMP; the sequence is RR. Cysteine 146 functions as the Nucleophile in the catalytic mechanism. DUMP-binding positions include 166–169, asparagine 177, and 207–209; these read RSAD and HIY. Aspartate 169 contacts (6R)-5,10-methylene-5,6,7,8-tetrahydrofolate. (6R)-5,10-methylene-5,6,7,8-tetrahydrofolate is bound at residue alanine 263.

It belongs to the thymidylate synthase family. Bacterial-type ThyA subfamily. In terms of assembly, homodimer.

The protein localises to the cytoplasm. The catalysed reaction is dUMP + (6R)-5,10-methylene-5,6,7,8-tetrahydrofolate = 7,8-dihydrofolate + dTMP. It participates in pyrimidine metabolism; dTTP biosynthesis. In terms of biological role, catalyzes the reductive methylation of 2'-deoxyuridine-5'-monophosphate (dUMP) to 2'-deoxythymidine-5'-monophosphate (dTMP) while utilizing 5,10-methylenetetrahydrofolate (mTHF) as the methyl donor and reductant in the reaction, yielding dihydrofolate (DHF) as a by-product. This enzymatic reaction provides an intracellular de novo source of dTMP, an essential precursor for DNA biosynthesis. The polypeptide is Thymidylate synthase (Brucella anthropi (strain ATCC 49188 / DSM 6882 / CCUG 24695 / JCM 21032 / LMG 3331 / NBRC 15819 / NCTC 12168 / Alc 37) (Ochrobactrum anthropi)).